A 187-amino-acid polypeptide reads, in one-letter code: Peptidyl-tRNA hydrolase (187 aa).

Tyrosine 15 provides a ligand contact to tRNA. The active-site Proton acceptor is the histidine 20. Positions 64, 66, and 112 each coordinate tRNA.

It belongs to the PTH family. In terms of assembly, monomer.

Its subcellular location is the cytoplasm. The enzyme catalyses an N-acyl-L-alpha-aminoacyl-tRNA + H2O = an N-acyl-L-amino acid + a tRNA + H(+). Hydrolyzes ribosome-free peptidyl-tRNAs (with 1 or more amino acids incorporated), which drop off the ribosome during protein synthesis, or as a result of ribosome stalling. Functionally, catalyzes the release of premature peptidyl moieties from peptidyl-tRNA molecules trapped in stalled 50S ribosomal subunits, and thus maintains levels of free tRNAs and 50S ribosomes. The sequence is that of Peptidyl-tRNA hydrolase from Bacteroides fragilis (strain ATCC 25285 / DSM 2151 / CCUG 4856 / JCM 11019 / LMG 10263 / NCTC 9343 / Onslow / VPI 2553 / EN-2).